We begin with the raw amino-acid sequence, 860 residues long: Leucine--tRNA ligase (860 aa).

Residues 42 to 52 carry the 'HIGH' region motif; the sequence is PYPSGRLHMGH. Positions 619–623 match the 'KMSKS' region motif; it reads KMSKS. An ATP-binding site is contributed by Lys-622.

This sequence belongs to the class-I aminoacyl-tRNA synthetase family.

The protein localises to the cytoplasm. It catalyses the reaction tRNA(Leu) + L-leucine + ATP = L-leucyl-tRNA(Leu) + AMP + diphosphate. The sequence is that of Leucine--tRNA ligase from Escherichia coli (strain SMS-3-5 / SECEC).